Consider the following 130-residue polypeptide: Chaperone protein SycT (130 aa).

As to quaternary structure, binds to YopT.

Its function is as follows. Functions as a specific chaperone for YopT. The protein is Chaperone protein SycT (sycT) of Yersinia enterocolitica.